The chain runs to 21 residues: Peptide PGLa-R2 (21 aa).

Leu-21 carries the post-translational modification Leucine amide.

Expressed by the skin glands.

The protein localises to the secreted. In terms of biological role, antimicrobial peptide. This chain is Peptide PGLa-R2, found in Xenopus ruwenzoriensis (Uganda clawed frog).